Reading from the N-terminus, the 358-residue chain is tRNA-specific 2-thiouridylase MnmA (358 aa).

ATP-binding positions include glycine 8–serine 15 and methionine 34. Cysteine 103 acts as the Nucleophile in catalysis. An intrachain disulfide couples cysteine 103 to cysteine 199. Glycine 127 is a binding site for ATP. Residues lysine 149–glutamine 151 are interaction with tRNA. The Cysteine persulfide intermediate role is filled by cysteine 199. The interaction with tRNA stretch occupies residues arginine 305 to tyrosine 306.

Belongs to the MnmA/TRMU family.

It is found in the cytoplasm. It carries out the reaction S-sulfanyl-L-cysteinyl-[protein] + uridine(34) in tRNA + AH2 + ATP = 2-thiouridine(34) in tRNA + L-cysteinyl-[protein] + A + AMP + diphosphate + H(+). Functionally, catalyzes the 2-thiolation of uridine at the wobble position (U34) of tRNA, leading to the formation of s(2)U34. The protein is tRNA-specific 2-thiouridylase MnmA of Clostridium beijerinckii (strain ATCC 51743 / NCIMB 8052) (Clostridium acetobutylicum).